Here is a 393-residue protein sequence, read N- to C-terminus: MNQLDTKFGEFGGMYVPELLIPALDQLEKAFLDAKEDPSFNEEFLSLLKDYAGRPTAMTLTRNLVSNPKVKLYLKREDLLHGGAHKTNQVLGQALLTKRMGKKEVIAETGAGQHGVATALACALLGLKARIYMGAKDVERQAPNVFRMKLMGAEVIPVNAGSGTLKDAVNEAMRDWSANYDTAHYLLGTAAGPHPFPTIVREYHRMIGEETRAQIMEKEGRLPDAVVACVGGGSNAIGMFADFIDEPSVRLVGVEPAGKGVHTKEHGATIVTGTKGILHGAYTFIMQDKEGQIEESYSVSAGLDYPAVGPQHAYLHDIGRAEYVAATDEEALNAFQLLARKEGIIPALESSHALAHALNMADEAEEETIIVVNLSGRGDKDLAHVINILGDDL.

Position 86 is an N6-(pyridoxal phosphate)lysine (Lys-86).

This sequence belongs to the TrpB family. Tetramer of two alpha and two beta chains. Requires pyridoxal 5'-phosphate as cofactor.

The catalysed reaction is (1S,2R)-1-C-(indol-3-yl)glycerol 3-phosphate + L-serine = D-glyceraldehyde 3-phosphate + L-tryptophan + H2O. It functions in the pathway amino-acid biosynthesis; L-tryptophan biosynthesis; L-tryptophan from chorismate: step 5/5. Functionally, the beta subunit is responsible for the synthesis of L-tryptophan from indole and L-serine. In Alteromonas mediterranea (strain DSM 17117 / CIP 110805 / LMG 28347 / Deep ecotype), this protein is Tryptophan synthase beta chain.